The chain runs to 178 residues: Arginine repressor (178 aa).

The tract at residues 1–20 is disordered; it reads MTEAQEPEYGGPSVPQTRTA.

It belongs to the ArgR family.

It is found in the cytoplasm. Its pathway is amino-acid biosynthesis; L-arginine biosynthesis [regulation]. Functionally, regulates arginine biosynthesis genes. In Streptomyces griseus subsp. griseus (strain JCM 4626 / CBS 651.72 / NBRC 13350 / KCC S-0626 / ISP 5235), this protein is Arginine repressor.